The primary structure comprises 154 residues: Ribonuclease 8 (154 aa).

A signal peptide spans 1–27 (MAPARAGCCPLLLLLLGLWVAEVLVRA). The Proton acceptor role is filled by His42. 4 disulfide bridges follow: Cys50/Cys93, Cys64/Cys118, Cys82/Cys133, and Cys89/Cys96. Substrate contacts are provided by residues 65–69 (KDLNT) and Lys90. The active-site Proton donor is His149.

Belongs to the pancreatic ribonuclease family. As to expression, expressed prominently in the placenta and is not detected in any other tissues examined.

It is found in the secreted. In terms of biological role, has a low ribonuclease activity. The protein is Ribonuclease 8 (RNASE8) of Homo sapiens (Human).